The chain runs to 295 residues: N-acetylmuramic acid 6-phosphate etherase (295 aa).

One can recognise an SIS domain in the interval Val-54–Lys-217. Glu-82 acts as the Proton donor in catalysis. The active site involves Glu-113.

It belongs to the GCKR-like family. MurNAc-6-P etherase subfamily. Homodimer.

The catalysed reaction is N-acetyl-D-muramate 6-phosphate + H2O = N-acetyl-D-glucosamine 6-phosphate + (R)-lactate. It participates in amino-sugar metabolism; N-acetylmuramate degradation. Its function is as follows. Specifically catalyzes the cleavage of the D-lactyl ether substituent of MurNAc 6-phosphate, producing GlcNAc 6-phosphate and D-lactate. This Geobacillus sp. (strain WCH70) protein is N-acetylmuramic acid 6-phosphate etherase.